The primary structure comprises 585 residues: Glycerol-3-phosphate acyltransferase 1 (585 aa).

3 consecutive transmembrane segments (helical) span residues 126–146 (FFPYFMLVAFEGGSIIRAILL), 334–354 (TPLATLAMFIWLPIGFLLAVF), and 356–376 (ISVGVFLPYHVANFLASMSGV). The HXXXXD motif signature appears at 403-408 (HRTLLD).

This sequence belongs to the GPAT/DAPAT family. As to expression, highly expressed in developing siliques and flower buds. Weakly or not expressed in roots, seedlings and leaves.

It is found in the membrane. Its subcellular location is the mitochondrion. The enzyme catalyses sn-glycerol 3-phosphate + an acyl-CoA = a 1-acyl-sn-glycero-3-phosphate + CoA. The protein operates within phospholipid metabolism; CDP-diacylglycerol biosynthesis; CDP-diacylglycerol from sn-glycerol 3-phosphate: step 1/3. In terms of biological role, esterifies acyl-group from acyl-ACP to the sn-1 position of glycerol-3-phosphate, an essential step in glycerolipid biosynthesis. Involved in pollen development, by being required for tapetum differentiation and male fertility. In addition to the sporophytic effect, it also exerts a gametophytic effect on pollen performance. This chain is Glycerol-3-phosphate acyltransferase 1 (GPAT1), found in Arabidopsis thaliana (Mouse-ear cress).